The sequence spans 159 residues: Nucleotide-binding protein PSPA7_4966 (159 aa).

It belongs to the YajQ family.

Functionally, nucleotide-binding protein. This is Nucleotide-binding protein PSPA7_4966 from Pseudomonas paraeruginosa (strain DSM 24068 / PA7) (Pseudomonas aeruginosa (strain PA7)).